A 167-amino-acid polypeptide reads, in one-letter code: NAD(P)H-quinone oxidoreductase subunit I, chloroplastic (167 aa).

2 4Fe-4S ferredoxin-type domains span residues 55-84 and 95-124; these read GRIHFEFDKCIACEVCVRVCPIDLPVVDWK and LNYSIDFGICIFCGNCVEYCPTNCLSMTEE. Positions 64, 67, 70, 74, 104, 107, 110, and 114 each coordinate [4Fe-4S] cluster.

It belongs to the complex I 23 kDa subunit family. NDH is composed of at least 16 different subunits, 5 of which are encoded in the nucleus. It depends on [4Fe-4S] cluster as a cofactor.

Its subcellular location is the plastid. It localises to the chloroplast thylakoid membrane. The catalysed reaction is a plastoquinone + NADH + (n+1) H(+)(in) = a plastoquinol + NAD(+) + n H(+)(out). It catalyses the reaction a plastoquinone + NADPH + (n+1) H(+)(in) = a plastoquinol + NADP(+) + n H(+)(out). In terms of biological role, NDH shuttles electrons from NAD(P)H:plastoquinone, via FMN and iron-sulfur (Fe-S) centers, to quinones in the photosynthetic chain and possibly in a chloroplast respiratory chain. The immediate electron acceptor for the enzyme in this species is believed to be plastoquinone. Couples the redox reaction to proton translocation, and thus conserves the redox energy in a proton gradient. This Gossypium barbadense (Sea Island cotton) protein is NAD(P)H-quinone oxidoreductase subunit I, chloroplastic.